The following is a 426-amino-acid chain: Histidine--tRNA ligase (426 aa).

The protein belongs to the class-II aminoacyl-tRNA synthetase family. In terms of assembly, homodimer.

It localises to the cytoplasm. It carries out the reaction tRNA(His) + L-histidine + ATP = L-histidyl-tRNA(His) + AMP + diphosphate + H(+). The protein is Histidine--tRNA ligase of Hydrogenovibrio crunogenus (strain DSM 25203 / XCL-2) (Thiomicrospira crunogena).